The following is a 292-amino-acid chain: Zinc metalloproteinase nas-3 (292 aa).

The signal sequence occupies residues 1 to 16; it reads MYRFIIFFSLLALTAS. Residues 56 to 249 form the Peptidase M12A domain; that stretch reads RGIAIHPWQW…RNINTLYKCN (194 aa). Disulfide bonds link C103-C248 and C128-C158. Residue H169 participates in Zn(2+) binding. Residue E170 is part of the active site. Positions 173 and 179 each coordinate Zn(2+).

Requires Zn(2+) as cofactor.

It localises to the secreted. Metalloprotease. This is Zinc metalloproteinase nas-3 (nas-3) from Caenorhabditis elegans.